Reading from the N-terminus, the 130-residue chain is MTLMDPLADAMATIKNNEMVGNKECVIEPASKLIGRVLKVMQEYGYIGSFEFIDDGRSGKFLVKLVGRINDCGVIKPRHPVKKDEWEYWEQRYLPARDFGLLIVTTPEGVMSHYEAKERGIGGRLLAYVY.

The protein belongs to the universal ribosomal protein uS8 family. In terms of assembly, part of the 30S ribosomal subunit.

In terms of biological role, one of the primary rRNA binding proteins, it binds directly to 16S rRNA central domain where it helps coordinate assembly of the platform of the 30S subunit. This Methanopyrus kandleri (strain AV19 / DSM 6324 / JCM 9639 / NBRC 100938) protein is Small ribosomal subunit protein uS8.